Here is a 524-residue protein sequence, read N- to C-terminus: MSDPLIKRALVSVSDKTGIVDFCRELVSLGVEIFSTGGTLKTLQDAGLKAASISTITGFPEIMDGRVKTLHPKIHGGLLAVRNNPDHSAQAIENGISFIDMVVVNLYPFEATVAKPDVSFEDAIENIDIGGPSMLRSAAKNNESVTVLTDSADYAGVLAEMRAGGGATLRSTRLRLALKVFELTSRYDRAIAGYLSKSAGTEVAAAESMTVQLDKELGMRYGENPHQSAGFYRLTDADGTRSFADYFEKLHGKELSYNNMLDIAAAGGLIEEFRGEDPSVVIIKHTNPCGVAQAPTLLEAWKRAFSTDTQAPFGGIIAFNRPLDMETAKAVNAIFTEILIAPAYEEGVLDMLMKKKDRRLLVQTGALPKGGWEFKSTPFGMLVQERDSRIATRDELKVVTKRQPTEEELGDLMFAWKICKHIKSNTILYVRNRQTYGVGAGQMSRVDSSKIARWKASEVNLDLHGSVVASDAFFPFADGLLAAAEAGVTAVIQPGGSIRDNEVIEAADANNLAMVFTGMRHFKH.

One can recognise an MGS-like domain in the interval 1–149 (MSDPLIKRAL…KNNESVTVLT (149 aa)).

It belongs to the PurH family.

It catalyses the reaction (6R)-10-formyltetrahydrofolate + 5-amino-1-(5-phospho-beta-D-ribosyl)imidazole-4-carboxamide = 5-formamido-1-(5-phospho-D-ribosyl)imidazole-4-carboxamide + (6S)-5,6,7,8-tetrahydrofolate. It carries out the reaction IMP + H2O = 5-formamido-1-(5-phospho-D-ribosyl)imidazole-4-carboxamide. It functions in the pathway purine metabolism; IMP biosynthesis via de novo pathway; 5-formamido-1-(5-phospho-D-ribosyl)imidazole-4-carboxamide from 5-amino-1-(5-phospho-D-ribosyl)imidazole-4-carboxamide (10-formyl THF route): step 1/1. Its pathway is purine metabolism; IMP biosynthesis via de novo pathway; IMP from 5-formamido-1-(5-phospho-D-ribosyl)imidazole-4-carboxamide: step 1/1. The polypeptide is Bifunctional purine biosynthesis protein PurH (Chlorobium phaeovibrioides (strain DSM 265 / 1930) (Prosthecochloris vibrioformis (strain DSM 265))).